The primary structure comprises 310 residues: Methionyl-tRNA formyltransferase (310 aa).

111 to 114 (SLLP) contacts (6S)-5,6,7,8-tetrahydrofolate.

Belongs to the Fmt family.

It carries out the reaction L-methionyl-tRNA(fMet) + (6R)-10-formyltetrahydrofolate = N-formyl-L-methionyl-tRNA(fMet) + (6S)-5,6,7,8-tetrahydrofolate + H(+). Functionally, attaches a formyl group to the free amino group of methionyl-tRNA(fMet). The formyl group appears to play a dual role in the initiator identity of N-formylmethionyl-tRNA by promoting its recognition by IF2 and preventing the misappropriation of this tRNA by the elongation apparatus. This Rhodopseudomonas palustris (strain BisB5) protein is Methionyl-tRNA formyltransferase.